The sequence spans 588 residues: Aspartate--tRNA ligase (588 aa).

An L-aspartate-binding site is contributed by Glu172. The tract at residues 196–199 is aspartate; the sequence is QLFK. Arg218 lines the L-aspartate pocket. ATP contacts are provided by residues 218–220 and Gln227; that span reads RDE. His449 is an L-aspartate binding site. An ATP-binding site is contributed by Glu483. Arg490 contributes to the L-aspartate binding site. 535–538 serves as a coordination point for ATP; it reads GLDR.

Belongs to the class-II aminoacyl-tRNA synthetase family. Type 1 subfamily. In terms of assembly, homodimer.

The protein resides in the cytoplasm. The catalysed reaction is tRNA(Asp) + L-aspartate + ATP = L-aspartyl-tRNA(Asp) + AMP + diphosphate. Catalyzes the attachment of L-aspartate to tRNA(Asp) in a two-step reaction: L-aspartate is first activated by ATP to form Asp-AMP and then transferred to the acceptor end of tRNA(Asp). This chain is Aspartate--tRNA ligase, found in Pasteurella multocida (strain Pm70).